Here is an 846-residue protein sequence, read N- to C-terminus: MVAPGRMVTSSRRIGRVTNKTKLIIYRGSDKVDTSAAETVLWDQEAGGAGKDSNKHQHIGATGVESGELLEHHLQAALSSASLLHSSNKPSSPKSVKEAPAAALNYHIPTPDATGLVSDTVFSQLYQRTKYVEPYNFIRFSDTVEESSCGWGGLGYCMDDADERWLNDFNSKAEGSSGDVKSDKEQGRGMRVKGKDREKEKGDAPAPLVISEDMFEYIMGVFEKYTEENAPMLHTDLSLLPPFSAVENMFSTPISPAFLPSNEIPKELGDLKACARMARNVYPHWKSRREQRQGKSILPQLNYDETNDNDPYVCFRRRDIRATRKTRRTDNFSIEQFQKLQFELRSAHALADRVLTREREKKSLYEAEKELWEARWKFFETKRRWPSLGMTSDEEHKITGRPTIVPPIQIPSLSGQTPLTSGQSSSHMRKRTDKDREERAQRERYDAQRNAERSGILSGRSNAPDALKERLQALQQKTEEMLARKKEQDAHWDDSIDSPYQPLPPSNSVHAFRSLFVLDPCRAQCKDSETGNEILHPESFRIRRGRGGIVRLDRRTSIYSHRRGIQPTSPSEYPTWLFPDIAPRRSEKKRPRSIDEVEEEMQEQSPKAMRKDLNETWRYDVDRGGAVGVGMGLEEDYDRVIIDDLEAKYIRHRISLLQESDCAKLRPDNYILDQTREALDAAADAKPPPAPIFQKPPAPQPNPQLLAAHLQQQQMLAQQQQMEQFQRFQLMAQQQAMAQAQAQAQAQAQAQAQAQAQAQVQAQGQGHPQAHLQTHPQGVSQPNGVNSPMPNGQQMLPPSDGVKQLKLPPHAVARLGAAMANANANANGGLHVLQQQQQQHAQTSQQ.

Disordered regions lie at residues 169–204 (FNSK…KGDA), 391–466 (TSDE…APDA), 587–609 (EKKR…PKAM), 682–702 (AADA…PQPN), and 759–804 (QVQA…GVKQ). Basic and acidic residues predominate over residues 180-203 (VKSDKEQGRGMRVKGKDREKEKGD). A compositionally biased stretch (polar residues) spans 411–426 (PSLSGQTPLTSGQSSS). Basic and acidic residues predominate over residues 432-452 (TDKDREERAQRERYDAQRNAE). A coiled-coil region spans residues 434–490 (KDREERAQRERYDAQRNAERSGILSGRSNAPDALKERLQALQQKTEEMLARKKEQDA). The span at 686 to 702 (KPPPAPIFQKPPAPQPN) shows a compositional bias: pro residues. The span at 759 to 773 (QVQAQGQGHPQAHLQ) shows a compositional bias: low complexity. The segment covering 774–796 (THPQGVSQPNGVNSPMPNGQQML) has biased composition (polar residues).

This sequence belongs to the enhancer of polycomb family. As to quaternary structure, component of the NuA4 histone acetyltransferase complex.

The protein resides in the nucleus. Its function is as follows. Component of the NuA4 histone acetyltransferase complex which is involved in transcriptional activation of selected genes principally by acetylation of nucleosomal histone H4 and H2A. The NuA4 complex is also involved in DNA repair. Involved in gene silencing by neighboring heterochromatin, blockage of the silencing spreading along the chromosome, and required for cell cycle progression through G2/M. This chain is Enhancer of polycomb-like protein 1 (EPL1), found in Cryptococcus neoformans var. neoformans serotype D (strain B-3501A) (Filobasidiella neoformans).